The primary structure comprises 450 residues: Zinc metalloproteinase nas-13 (450 aa).

The first 31 residues, Met-1–Ala-31, serve as a signal peptide directing secretion. Asn-68 carries N-linked (GlcNAc...) asparagine glycosylation. The Peptidase M12A domain maps to Asn-110–Pro-303. 2 cysteine pairs are disulfide-bonded: Cys-152-Cys-302 and Cys-174-Cys-193. His-201 lines the Zn(2+) pocket. The active site involves Glu-202. Zn(2+) contacts are provided by His-205 and His-211. A glycan (N-linked (GlcNAc...) asparagine) is linked at Asn-225. The short motif at Arg-349 to Asp-351 is the Cell attachment site element. 6 cysteine pairs are disulfide-bonded: Cys-368–Cys-404, Cys-375–Cys-397, Cys-384–Cys-401, Cys-414–Cys-450, Cys-421–Cys-443, and Cys-430–Cys-447. ShKT domains follow at residues Cys-368–Cys-404 and Cys-414–Cys-450. Residue Asn-431 is glycosylated (N-linked (GlcNAc...) asparagine).

Zn(2+) is required as a cofactor.

The protein localises to the secreted. In terms of biological role, metalloprotease. The polypeptide is Zinc metalloproteinase nas-13 (nas-13) (Caenorhabditis elegans).